Reading from the N-terminus, the 102-residue chain is MGKTGNIEHVEERVESELMPPSMYKVILNNDDYTPMDFVIEVLQIFFRKNEQEATDIMLTIHHQGKGICGIFPFGIAETKVIQVNQFARQNQHPLLCSLEKA.

This sequence belongs to the ClpS family. Binds to the N-terminal domain of the chaperone ClpA.

Functionally, involved in the modulation of the specificity of the ClpAP-mediated ATP-dependent protein degradation. In Shewanella oneidensis (strain ATCC 700550 / JCM 31522 / CIP 106686 / LMG 19005 / NCIMB 14063 / MR-1), this protein is ATP-dependent Clp protease adapter protein ClpS.